The primary structure comprises 418 residues: Glutamyl-tRNA reductase (418 aa).

Substrate contacts are provided by residues 49-52 (TCNR), Ser-109, 114-116 (EPQ), and Gln-120. Cys-50 serves as the catalytic Nucleophile. NADP(+) is bound at residue 189-194 (GAGETI).

The protein belongs to the glutamyl-tRNA reductase family. Homodimer.

The catalysed reaction is (S)-4-amino-5-oxopentanoate + tRNA(Glu) + NADP(+) = L-glutamyl-tRNA(Glu) + NADPH + H(+). Its pathway is porphyrin-containing compound metabolism; protoporphyrin-IX biosynthesis; 5-aminolevulinate from L-glutamyl-tRNA(Glu): step 1/2. In terms of biological role, catalyzes the NADPH-dependent reduction of glutamyl-tRNA(Glu) to glutamate 1-semialdehyde (GSA). This chain is Glutamyl-tRNA reductase, found in Pectobacterium atrosepticum (strain SCRI 1043 / ATCC BAA-672) (Erwinia carotovora subsp. atroseptica).